The primary structure comprises 100 residues: Integration host factor subunit alpha (100 aa).

The protein belongs to the bacterial histone-like protein family. Heterodimer of an alpha and a beta chain.

In terms of biological role, this protein is one of the two subunits of integration host factor, a specific DNA-binding protein that functions in genetic recombination as well as in transcriptional and translational control. The chain is Integration host factor subunit alpha from Caulobacter vibrioides (strain ATCC 19089 / CIP 103742 / CB 15) (Caulobacter crescentus).